We begin with the raw amino-acid sequence, 270 residues long: Protein-ADP-ribose hydrolase (270 aa).

One can recognise a Macro domain in the interval 73–267; sequence VSVKDCQKTN…LYDTYLQKEN (195 aa). ADP-D-ribose is bound by residues Asp92, Ile93, and Asn106. The Zn(2+) site is built by Cys112, His117, and Cys119. 8 residues coordinate ADP-D-ribose: Cys119, Ile120, Asp121, Ser212, Thr213, Gly214, Glu215, and Phe216.

It belongs to the MacroD-type family. Zn-Macro subfamily. It depends on Zn(2+) as a cofactor.

It catalyses the reaction 4-O-(ADP-D-ribosyl)-L-aspartyl-[protein] + H2O = L-aspartyl-[protein] + ADP-D-ribose + H(+). In terms of biological role, ADP-ribosylhydrolase that specifically reverses the SirTM-mediated mono-ADP-ribosylation at an asparatate residue of GcvH-L, by releasing ADP-ribose from the target protein. May play a role in the regulation of the response to host-induced oxidative stress. This chain is Protein-ADP-ribose hydrolase, found in Streptococcus pyogenes serotype M3 (strain ATCC BAA-595 / MGAS315).